An 88-amino-acid polypeptide reads, in one-letter code: UPF0495 protein DEHA2C16280g (88 aa).

Residues 25–47 (YPLFAAMGVAVASGCFFTYRHFA) traverse the membrane as a helical segment.

It belongs to the UPF0495 family.

Its subcellular location is the membrane. This chain is UPF0495 protein DEHA2C16280g, found in Debaryomyces hansenii (strain ATCC 36239 / CBS 767 / BCRC 21394 / JCM 1990 / NBRC 0083 / IGC 2968) (Yeast).